Reading from the N-terminus, the 169-residue chain is S-ribosylhomocysteine lyase (169 aa).

Histidine 54, histidine 58, and cysteine 128 together coordinate Fe cation.

The protein belongs to the LuxS family. Homodimer. Fe cation is required as a cofactor.

It carries out the reaction S-(5-deoxy-D-ribos-5-yl)-L-homocysteine = (S)-4,5-dihydroxypentane-2,3-dione + L-homocysteine. Functionally, involved in the synthesis of autoinducer 2 (AI-2) which is secreted by bacteria and is used to communicate both the cell density and the metabolic potential of the environment. The regulation of gene expression in response to changes in cell density is called quorum sensing. Catalyzes the transformation of S-ribosylhomocysteine (RHC) to homocysteine (HC) and 4,5-dihydroxy-2,3-pentadione (DPD). This Aeromonas hydrophila subsp. hydrophila (strain ATCC 7966 / DSM 30187 / BCRC 13018 / CCUG 14551 / JCM 1027 / KCTC 2358 / NCIMB 9240 / NCTC 8049) protein is S-ribosylhomocysteine lyase.